We begin with the raw amino-acid sequence, 351 residues long: Photosystem II D2 protein (351 aa).

A helical transmembrane segment spans residues 39–59 (TAYLAAGGWMTGTTFVTSWYT). A chlorophyll a-binding site is contributed by histidine 116. A helical membrane pass occupies residues 123 to 139 (GFCLRQFEIARLVGIRP). Pheophytin a-binding residues include glutamine 128 and asparagine 141. The helical transmembrane segment at 151 to 164 (VFVSVFLLYPLGQA) threads the bilayer. Histidine 196 lines the chlorophyll a pocket. A helical transmembrane segment spans residues 206–226 (GALLCAIHGATVENTLFEDGD). A plastoquinone is bound by residues histidine 213 and phenylalanine 260. A Fe cation-binding site is contributed by histidine 213. Histidine 267 contacts Fe cation. Residues 277–293 (GLWTSAIGIVGLALNLR) form a helical membrane-spanning segment.

The protein belongs to the reaction center PufL/M/PsbA/D family. PSII is composed of 1 copy each of membrane proteins PsbA, PsbB, PsbC, PsbD, PsbE, PsbF, PsbH, PsbI, PsbJ, PsbK, PsbL, PsbM, PsbT, PsbX, PsbY, PsbZ, Psb30/Ycf12, at least 3 peripheral proteins of the oxygen-evolving complex and a large number of cofactors. It forms dimeric complexes. The D1/D2 heterodimer binds P680, chlorophylls that are the primary electron donor of PSII, and subsequent electron acceptors. It shares a non-heme iron and each subunit binds pheophytin, quinone, additional chlorophylls, carotenoids and lipids. There is also a Cl(-1) ion associated with D1 and D2, which is required for oxygen evolution. The PSII complex binds additional chlorophylls, carotenoids and specific lipids. serves as cofactor.

The protein localises to the plastid. It is found in the chloroplast thylakoid membrane. The catalysed reaction is 2 a plastoquinone + 4 hnu + 2 H2O = 2 a plastoquinol + O2. In terms of biological role, photosystem II (PSII) is a light-driven water:plastoquinone oxidoreductase that uses light energy to abstract electrons from H(2)O, generating O(2) and a proton gradient subsequently used for ATP formation. It consists of a core antenna complex that captures photons, and an electron transfer chain that converts photonic excitation into a charge separation. The D1/D2 (PsbA/PsbD) reaction center heterodimer binds P680, the primary electron donor of PSII as well as several subsequent electron acceptors. D2 is needed for assembly of a stable PSII complex. This chain is Photosystem II D2 protein, found in Trieres chinensis (Marine centric diatom).